A 211-amino-acid polypeptide reads, in one-letter code: Claudin-1 (211 aa).

Residues 1–7 (MANAGLQ) are Cytoplasmic-facing. The chain crosses the membrane as a helical span at residues 8-28 (LLGFILASLGWIGSIVSTALP). The Extracellular portion of the chain corresponds to 29–81 (QWKIYSYAGDNIVTAQAIYEGLWMSCVSQSTGQIQCKVFDSLLNLNSTLQATR). An intrachain disulfide couples Cys-54 to Cys-64. A helical transmembrane segment spans residues 82 to 102 (ALMVIGILLGLIAIFVSTIGM). Over 103–115 (KCMRCLEDDEVQK) the chain is Cytoplasmic. A helical membrane pass occupies residues 116–136 (MWMAVIGGIIFLISGLATLVA). Over 137-163 (TAWYGNRIVQEFYDPLTPINARYEFGQ) the chain is Extracellular. A helical membrane pass occupies residues 164-184 (ALFTGWAAASLCLLGGVLLSC). Residues 185–211 (SCPRKTTSYPTPRPYPKPTPSSGKDYV) are Cytoplasmic-facing. A disordered region spans residues 190–211 (TTSYPTPRPYPKPTPSSGKDYV). Positions 210-211 (YV) are interactions with TJP1, TJP2, TJP3 and PATJ.

Belongs to the claudin family. Can form homo- and heteropolymers with other CLDN. Homopolymers interact with CLDN3, but not CLDN2, homopolymers. Directly interacts with TJP1/ZO-1, TJP2/ZO-2 and TJP3/ZO-3. Interacts with MPDZ and PATJ. Interacts with OCLN, CD81, CLDN4, CLDN6 and CLDN9. Detected in epidermis and liver (at protein level). Widely expressed, with highest levels in liver and kidney.

The protein localises to the cell junction. Its subcellular location is the tight junction. It is found in the cell membrane. It localises to the basolateral cell membrane. In terms of biological role, claudins function as major constituents of the tight junction complexes that regulate the permeability of epithelia. While some claudin family members play essential roles in the formation of impermeable barriers, others mediate the permeability to ions and small molecules. Often, several claudin family members are coexpressed and interact with each other, and this determines the overall permeability. CLDN1 is required to prevent the paracellular diffusion of small molecules through tight junctions in the epidermis and is required for the normal barrier function of the skin. Required for normal water homeostasis and to prevent excessive water loss through the skin, probably via an indirect effect on the expression levels of other proteins, since CLDN1 itself seems to be dispensable for water barrier formation in keratinocyte tight junctions. The protein is Claudin-1 (Cldn1) of Mus musculus (Mouse).